The primary structure comprises 155 residues: DNA gyrase inhibitor (155 aa).

This sequence belongs to the DNA gyrase inhibitor family. Interacts with DNA gyrase.

Its subcellular location is the cytoplasm. Its function is as follows. Inhibits the supercoiling activity of DNA gyrase. Acts by inhibiting DNA gyrase at an early step, prior to (or at the step of) binding of DNA by the gyrase. It protects cells against toxins that target DNA gyrase, by inhibiting activity of these toxins and reducing the formation of lethal double-strand breaks in the cell. This is DNA gyrase inhibitor from Edwardsiella ictaluri (strain 93-146).